Here is a 200-residue protein sequence, read N- to C-terminus: Large ribosomal subunit protein uL4 (200 aa).

Residues 42–65 (TRAHKSRADVSGGGKKPFRQKGTG) are disordered.

It belongs to the universal ribosomal protein uL4 family. As to quaternary structure, part of the 50S ribosomal subunit.

Its function is as follows. One of the primary rRNA binding proteins, this protein initially binds near the 5'-end of the 23S rRNA. It is important during the early stages of 50S assembly. It makes multiple contacts with different domains of the 23S rRNA in the assembled 50S subunit and ribosome. Functionally, forms part of the polypeptide exit tunnel. This chain is Large ribosomal subunit protein uL4, found in Acinetobacter baumannii (strain AB307-0294).